Reading from the N-terminus, the 3583-residue chain is MSKKSIQKVYALTPMQEGMLYHAMLDPHSSSYFTQLELGIHGAFDLEIFEKSVNELIRSYDILRTVFVHQQLQKPRQVVLAERKTKVHYEDISHADENRQKEHIERYKQDVQRQGFNLAKDILFKVAVFRLAADQLYLVWSNHHIMMDGWSMGVLMKSLFQNYEALRAGRTPANGQGKPYSDYIKWLGKQDNEEAESYWSERLAGFEQPSVLPGRLPVKKDEYVNKEYSFTWDETLVARIQQTANLHQVTGPNLFQAVWGIVLSKYNFTDDVIFGTVVSGRPSEINGIETMAGLFINTIPVRVKVERDAAFADIFTAVQQHAVEAERYDYVPLYEIQKRSALDGNLLNHLVAFENYPLDQELENGSMEDRLGFSIKVESAFEQTSFDFNLIVYPGKTWTVKIKYNGAAFDSAFIERTAEHLTRMMEAAVDQPAAFVREYGLVGDEEQRQIVEVFNSTKAELPEGMAVHQVFEEQAKRTPASTAVVYEGTKLTYRELNAAANRLARKLVEHGLQKGETAAIMNDRSVETVVGMLAVLKAGAAYVPLDPALPGDRLRFMAEDSSVRMVLIGNSYTGQAHQLQVPVLTLDIGFEESEAADNLNLPSAPSDLAYIMYTSGSTGKPKGVMIEHKSILRLVKNAGYVPVTEEDRMAQTGAVSFDAGTFEVFGALLNGAALYPVKKETLLDAKQFAAFLREQSITTMWLTSPLFNQLAAKDAGMFGTLRHLIIGGDALVPHIVSKVKQASPSLSLWNGYGPTENTTFSTSFLIDREYGGSIPIGKPIGNSTAYIMDEQQCLQPIGAPGELCVGGIGVARGYVNLPELTEKQFLEDPFRPGERIYRTGDLARWLPDGNIEFLGRIDNQVKVRGFRIELGEIETKLNMAEHVTEAAVIIRKNKADENEICAYFTADREVAVSELRKTLSQSLPDYMVPAHLIQMDSLPLTPNGKINKKELPAPQSEAVQPEYAAPKTESEKKLAEIWEGILGVKAGVTDNFFMIGGHSLKAMMMTAKIQEHFHKEVPIKVLFEKPTIQELALYLEENESKEEQTFEPIRQASYQQHYPVSPAQRRMYILNQLGQANTSYNVPAVLLLEGEVDKDRLENAIQQLINRHEILRTSFDMIDGEVVQTVHKNISFQLEAAKGREEDAEEIIKAFVQPFELNRAPLVRSKLVQLEEKRHLLLIDMHHIITDGSSTGILIGDLAKIYQGADLELPQIHYKDYAVWHKEQTNYQKDEEYWLDVFKGELPILDLPADFERPAERSFAGERVMFGLDKQITAQIKSLMAETDTTMYMFLLAAFNVLLSKYASQDDIIVGSPTAGRTHPDLQGVPGMFVNTVALRTAPAGDKTFAQFLEEVKTASLQAFEHQSYPLEELIEKLPLTRDTSRSPLFSVMFNMQNMEIPSLRLGDLKISSYSMLHHVAKFDLSLEAVEREEDIGLSFDYATALFKDETIRRWSRHFVNIIKAAAANPNVRLSDVDLLSSAETAALLEERHMTQITEATFAALFEKQAQQTPDHSAVKAGGNLLTYRELDEQANQLAHHLRAQGAGNEDIVAIVMDRSAEVMVSILGVMKAGAAFLPIDPDTPEERIRYSLEDSGAKFAVVNERNMTAIGQYEGIIVSLDDGKWRNESKERPSSISGSRNLAYVIYTSGTTGKPKGVQIEHRNLTNYVSWFSEEAGLTENDKTVLLSSYAFDLGYTSMFPVLLGGGELHIVQKETYTAPDEIAHYIKEHGITYIKLTPSLFHTIVNTASFAKDANFESLRLIVLGGEKIIPTDVIAFRKMYGHTEFINHYGPTEATIGAIAGRVDLYEPDAFAKRPTIGRPIANAGALVLNEALKLVPPGASGQLYITGQGLARGYLNRPQLTAERFVENPYSPGSLMYKTGDVVRRLSDGTLAFIGRADDQVKIRGYRIEPKEIETVMLSLSGIQEAVVLAVSEGGLQELCAYYTSDQDIEKAELRYQLSLTLPSHMIPAFFVQVDAIPLTANGKTDRNALPKPNAAQSGGKALAAPETALEESLCRIWQKTLGIEAIGIDDNFFDLGGHSLKGMMLIANIQAELEKSVPLKALFEQPTVRQLAAYMEASAVSGGHQVLKPADKQDMYPLSSAQKRMYVLNQLDRQTISYNMPSVLLMEGELDISRLRDSLNQLVNRHESLRTSFMEANGEPVQRIIEKAEVDLHVFEAKEDEADQKIKEFIRPFDLNDAPLIRAALLRIEAKKHLLLLDMHHIIADGVSRGIFVKELALLYKGEQLPEPTLHYKDFAVWQNEAEQKERMKEHEAYWMSVLSGELPELDLPLDYARPPVQSFKGDTIRFRTGSETAKAVEKLLAETGTTLHMVLHAVFHVFLSKISGQRDIVIGSVTAGRTNADVQDMPGMFVNTLALRMEAKEQQTFAELLELAKQTNLSALEHQEYPFEDLVNQLDLPRDMSRNPLFNVMVTTENPDKEQLTLQNLSISPYEAHQGTSKFDLTLGGFTDENGIGLQLEYATDLFAKETAEKWSEYVLRLLKAVADNPNQPLSSLLLVTETEKQALLEAWKGKALPVPTDKTVHQLFEETVQRHKDRPAVTYNGQSWTYGELNAKANRLARILMDCGISPDDRVGVLTKPSLEMSAAVLGVLKAGAAFVPIDPDYPDQRIEYILQDSGAKLLLKQEGISVPDSYTGDVILLDGSRTILSLPLDENDEGNPETAVTAENLAYMIYTSGTTGQPKGVMVEHHALVNLCFWHHDAFSMTAEDRSAKYAGFGFDASIWEMFPTWTIGAELHVIDEAIRLDIVRLNDYFETNGVTITFLPTQLAEQFMELENTSLRVLLTGGDKLKRAVKKPYTLVNNYGPTENTVVATSAEIHPEEGSLSIGRAIANTRVYILGEGNQVQPEGVAGELCVAGRGLARGYLNREDETAKRFVADPFVPGERMYRTGDLVKWVNGGIEYIGRIDQQVKVRGYRIELSEIEVQLAQLSEVQDAAVTAVKDKGGNTAIAAYVTPETADIEALKSTLKETLPDYMIPAFWVTLNELPVTANGKVDRKALPEPDIEAGSGEYKAPTTDMEELLAGIWQDVLGMSEVGVTDNFFSLGGDSIKGIQMASRLNQHGWKLEMKDLFQHPTIEELTQYVERAEGKQADQGPVEGEVILTPIQRWFFEKNFTNKHHWNQSVMLHAKKGFDPERVEKTLQALIEHHDALRMVYREENGDIVQVYKPIGESKVSFEIVDLYGSDEEMLRSQIKLLANKLQSSLDLRNGPLLKAEQYRTEAGDHLLIAVHHLVVDGVSWRILLEDFASGYMQAEKEESLVFPQKTNSFKDWAEELAAFSQSAHLLQQAEYWSQIAAEQVSPLPKDCETEQRIVKDTSSVLCELTAEDTKHLLTDVHQPYGTEINDILLSALGLTMKEWTKGAKIGINLEGHGREDIIPNVNISRTVGWFTAQYPVVLDISDADASAVIKTVKENLRRIPDKGVGYGILRYFTETAETKGFTPEISFNYLGQFDSEVKTDFFEPSAFDMGRQVSGESEALYALSFSGMIRNGRFVLSCSYNEKEFERATVEEQMERFKENLLMLIRHCTEKEDKEFTPSDFSAEDLEMDEMGDIFDMLEENLK.

3 Carrier domains span residues 965–1039 (APKT…EENE), 2005–2080 (APET…EASA), and 3034–3108 (APTT…ERAE). Residues Ser999, Ser2040, and Ser3069 each carry the O-(pantetheine 4'-phosphoryl)serine modification.

It belongs to the ATP-dependent AMP-binding enzyme family. Pantetheine 4'-phosphate is required as a cofactor.

It participates in antibiotic biosynthesis; surfactin biosynthesis. This protein is a multifunctional enzyme able to activate and polymerize the amino acids Leu, Glu, Asp and Val. Activation sites for these AA consist of individual domains. The protein is Surfactin synthase subunit 2 (srfAB) of Bacillus subtilis (strain 168).